A 363-amino-acid polypeptide reads, in one-letter code: S-adenosylmethionine:tRNA ribosyltransferase-isomerase (363 aa).

The protein belongs to the QueA family. Monomer.

Its subcellular location is the cytoplasm. The enzyme catalyses 7-aminomethyl-7-carbaguanosine(34) in tRNA + S-adenosyl-L-methionine = epoxyqueuosine(34) in tRNA + adenine + L-methionine + 2 H(+). It participates in tRNA modification; tRNA-queuosine biosynthesis. In terms of biological role, transfers and isomerizes the ribose moiety from AdoMet to the 7-aminomethyl group of 7-deazaguanine (preQ1-tRNA) to give epoxyqueuosine (oQ-tRNA). The chain is S-adenosylmethionine:tRNA ribosyltransferase-isomerase from Brucella abortus (strain S19).